A 247-amino-acid chain; its full sequence is TLC domain-containing protein 1 (247 aa).

Residues 1-35 form the signal peptide; sequence MPRLLHPALPLLLGATLTFRALRRALCRLPLPVHV. Residues 36 to 46 are Extracellular-facing; sequence RADPLRTWRWH. The region spanning 40–234 is the TLC domain; the sequence is LRTWRWHNLL…LLRSDFCPEH (195 aa). A helical membrane pass occupies residues 47-67; that stretch reads NLLVSFAHSIVSGIWALLCVW. The Cytoplasmic segment spans residues 68-83; the sequence is QTPDMLVEIETAWSLS. The helical transmembrane segment at 84-104 threads the bilayer; that stretch reads GYLLVCFSAGYFIHDTVDIVA. Residues 105–123 are Extracellular-facing; the sequence is SGQTRASWEYLVHHVMAMG. Residues 124–144 constitute an intramembrane region (helical); the sequence is AFFSGIFWSSFVGGGVLTLLV. The Extracellular segment spans residues 145 to 173; that stretch reads EVSNIFLTIRMMMKISNAQDHLLYRVNKY. A helical transmembrane segment spans residues 174–194; it reads VNLVMYFLFRLAPQAYLTHFF. Topologically, residues 195 to 201 are cytoplasmic; it reads LRYVNQR. A helical membrane pass occupies residues 202–222; it reads TLGTFLLGILLMLDVMIIIYF. Over 223 to 247 the chain is Extracellular; sequence SRLLRSDFCPEHVPKKQHKDKFLTE.

The protein resides in the cell membrane. Functionally, regulates the composition and fluidity of the plasma membrane. Inhibits the incorporation of membrane-fluidizing phospholipids containing omega-3 long-chain polyunsaturated fatty acids (LCPUFA) and thereby promotes membrane rigidity. Does not appear to have any effect on LCPUFA synthesis. The polypeptide is TLC domain-containing protein 1 (TLCD1) (Homo sapiens (Human)).